The primary structure comprises 501 residues: Beta-secretase 1 (501 aa).

Positions 1-21 are cleaved as a signal peptide; that stretch reads MAPALHWLLLWVGSGMLPAQG. Residues 22-45 constitute a propeptide that is removed on maturation; sequence THLGIRLPLRSGLAGPPLGLRLPR. Topologically, residues 22 to 457 are extracellular; it reads THLGIRLPLR…PQTDESTLMT (436 aa). The segment at 39-58 is disordered; that stretch reads LGLRLPRETDEESEEPGRRG. One can recognise a Peptidase A1 domain in the interval 75 to 416; that stretch reads YYVEMTVGSP…DRARKRIGFA (342 aa). Asp93 is an active-site residue. Residue Lys126 is modified to N6-acetyllysine. Residues Asn153, Asn172, and Asn223 are each glycosylated (N-linked (GlcNAc...) asparagine). 3 disulfide bridges follow: Cys216–Cys420, Cys278–Cys443, and Cys330–Cys380. 3 positions are modified to N6-acetyllysine: Lys275, Lys279, and Lys285. Residue Asp289 is part of the active site. N6-acetyllysine is present on residues Lys299, Lys300, and Lys307. Residue Asn354 is glycosylated (N-linked (GlcNAc...) asparagine). A helical membrane pass occupies residues 458–478; it reads IAYVMAAICALFMLPLCLMVC. Residues Cys474, Cys478, Cys482, and Cys485 are each lipidated (S-palmitoyl cysteine). The Cytoplasmic portion of the chain corresponds to 479-501; the sequence is QWRCLRCLRHQHDDFADDISLLK. Positions 479–501 are interaction with RTN3; sequence QWRCLRCLRHQHDDFADDISLLK. Residues 496–500 carry the DXXLL motif; the sequence is DISLL. Position 498 is a phosphoserine (Ser498). Residue Lys501 forms a Glycyl lysine isopeptide (Lys-Gly) (interchain with G-Cter in ubiquitin) linkage.

Belongs to the peptidase A1 family. As to quaternary structure, monomer. Interacts (via DXXLL motif) with GGA1, GGA2 and GGA3 (via their VHS domain); the interaction highly increases when BACE1 is phosphorylated at Ser-498. Interacts with RTN1; RTN2; RTN3 and RTN4; the interaction leads to inhibition of amyloid precursor protein processing. Interacts with SNX6. Interacts with PCSK9. Interacts with NAT8 and NAT8B. Interacts with BIN1. Interacts (via extracellular domain) with ADAM10 (via extracellular domain). Interacts with SORL1; this interaction may affect binding with APP and hence reduce APP cleavage. Interacts with NRDC AND NRG1. Post-translationally, N-Glycosylated. Addition of a bisecting N-acetylglucosamine by MGAT3 blocks lysosomal targeting, further degradation and is required for maintaining stability under stress conditions. In terms of processing, palmitoylation mediates lipid raft localization. Acetylated in the endoplasmic reticulum at Lys-126, Lys-275, Lys-279, Lys-285, Lys-299, Lys-300 and Lys-307. Acetylation by NAT8 and NAT8B is transient and deacetylation probably occurs in the Golgi. Acetylation regulates the maturation, the transport to the plasma membrane, the stability and the expression of the protein. Post-translationally, ubiquitinated at Lys-501, ubiquitination leads to lysosomal degradation. Monoubiquitinated and 'Lys-63'-linked polyubitinated. Deubiquitnated by USP8; inhibits lysosomal degradation. In terms of processing, phosphorylation at Ser-498 is required for interaction with GGA1 and retrograded transport from endosomal compartments to the trans-Golgi network. Non-phosphorylated BACE1 enters a direct recycling route to the cell surface. In terms of tissue distribution, expressed in the brain, specifically in neurons and astrocytes (at protein level).

Its subcellular location is the cell membrane. The protein localises to the golgi apparatus. It is found in the trans-Golgi network. The protein resides in the endoplasmic reticulum. It localises to the endosome. Its subcellular location is the late endosome. The protein localises to the early endosome. It is found in the cell surface. The protein resides in the cytoplasmic vesicle membrane. It localises to the membrane raft. Its subcellular location is the lysosome. The protein localises to the recycling endosome. It is found in the cell projection. The protein resides in the axon. It localises to the dendrite. It catalyses the reaction Broad endopeptidase specificity. Cleaves Glu-Val-Asn-Leu-|-Asp-Ala-Glu-Phe in the Swedish variant of Alzheimer's amyloid precursor protein.. Its activity is regulated as follows. Inhibited by RTN3 and RTN4. Its function is as follows. Responsible for the proteolytic processing of the amyloid precursor protein (APP). Cleaves at the N-terminus of the A-beta peptide sequence, between residues 671 and 672 of APP, leads to the generation and extracellular release of beta-cleaved soluble APP, and a corresponding cell-associated C-terminal fragment which is later released by gamma-secretase. Cleaves CHL1. In Mus musculus (Mouse), this protein is Beta-secretase 1.